The sequence spans 431 residues: Histidinol dehydrogenase (431 aa).

NAD(+) is bound by residues Y127, Q189, and N212. 3 residues coordinate substrate: S237, Q259, and H262. The Zn(2+) site is built by Q259 and H262. Active-site proton acceptor residues include E326 and H327. Substrate-binding residues include H327, D360, E414, and H419. Residue D360 coordinates Zn(2+). H419 is a binding site for Zn(2+).

The protein belongs to the histidinol dehydrogenase family. It depends on Zn(2+) as a cofactor.

The enzyme catalyses L-histidinol + 2 NAD(+) + H2O = L-histidine + 2 NADH + 3 H(+). It participates in amino-acid biosynthesis; L-histidine biosynthesis; L-histidine from 5-phospho-alpha-D-ribose 1-diphosphate: step 9/9. In terms of biological role, catalyzes the sequential NAD-dependent oxidations of L-histidinol to L-histidinaldehyde and then to L-histidine. In Xanthomonas oryzae pv. oryzae (strain KACC10331 / KXO85), this protein is Histidinol dehydrogenase.